A 297-amino-acid chain; its full sequence is Glycerol-3-phosphate dehydrogenase [NAD(P)+] (297 aa).

Residues tryptophan 11, arginine 30, and lysine 79 each coordinate NADPH. 3 residues coordinate sn-glycerol 3-phosphate: lysine 79, glycine 107, and serine 109. Residue alanine 111 participates in NADPH binding. 5 residues coordinate sn-glycerol 3-phosphate: lysine 161, aspartate 214, serine 224, arginine 225, and asparagine 226. The active-site Proton acceptor is lysine 161. Residue arginine 225 coordinates NADPH. Valine 249 and glutamate 251 together coordinate NADPH.

This sequence belongs to the NAD-dependent glycerol-3-phosphate dehydrogenase family.

It is found in the cytoplasm. It catalyses the reaction sn-glycerol 3-phosphate + NAD(+) = dihydroxyacetone phosphate + NADH + H(+). The enzyme catalyses sn-glycerol 3-phosphate + NADP(+) = dihydroxyacetone phosphate + NADPH + H(+). It functions in the pathway membrane lipid metabolism; glycerophospholipid metabolism. Its function is as follows. Catalyzes the reduction of the glycolytic intermediate dihydroxyacetone phosphate (DHAP) to sn-glycerol 3-phosphate (G3P), the key precursor for phospholipid synthesis. The sequence is that of Glycerol-3-phosphate dehydrogenase [NAD(P)+] from Wolinella succinogenes (strain ATCC 29543 / DSM 1740 / CCUG 13145 / JCM 31913 / LMG 7466 / NCTC 11488 / FDC 602W) (Vibrio succinogenes).